The sequence spans 81 residues: Cytotoxin 4 (81 aa).

Positions 1 to 21 (MKTLLLTLVVVTIVCLDLGYT) are cleaved as a signal peptide. Cystine bridges form between C24/C42, C35/C59, C63/C74, and C75/C80.

It belongs to the three-finger toxin family. Short-chain subfamily. Type IA cytotoxin sub-subfamily. Monomer in solution; Homodimer and oligomer in the presence of negatively charged lipids forming a pore with a size ranging between 20 and 30 Angstroms. In terms of tissue distribution, expressed by the venom gland.

The protein resides in the secreted. The protein localises to the target cell membrane. In terms of biological role, basic protein that bind to cell membrane and depolarizes cardiomyocytes. This cytotoxin also shows lytic activities, but 2-fold more important than that of CTX-A2. It binds to the integrin alpha-V/beta-3 with a moderate affinity. Inhibits protein kinase C. It may interact with sulfatides in the cell membrane, which induces pore formation and cell internalization and is responsible for cytotoxicity in cardiomyocytes. It may also target the mitochondrial membrane and induces mitochondrial swelling and fragmentation. This chain is Cytotoxin 4, found in Naja atra (Chinese cobra).